We begin with the raw amino-acid sequence, 157 residues long: 2-C-methyl-D-erythritol 2,4-cyclodiphosphate synthase (157 aa).

2 residues coordinate a divalent metal cation: aspartate 8 and histidine 10. 4-CDP-2-C-methyl-D-erythritol 2-phosphate contacts are provided by residues aspartate 8–histidine 10 and histidine 34–serine 35. Histidine 42 is a binding site for a divalent metal cation. Residues aspartate 56 to glycine 58, threonine 132 to glutamate 135, and arginine 142 each bind 4-CDP-2-C-methyl-D-erythritol 2-phosphate.

This sequence belongs to the IspF family. In terms of assembly, homotrimer. It depends on a divalent metal cation as a cofactor.

It catalyses the reaction 4-CDP-2-C-methyl-D-erythritol 2-phosphate = 2-C-methyl-D-erythritol 2,4-cyclic diphosphate + CMP. The protein operates within isoprenoid biosynthesis; isopentenyl diphosphate biosynthesis via DXP pathway; isopentenyl diphosphate from 1-deoxy-D-xylulose 5-phosphate: step 4/6. In terms of biological role, involved in the biosynthesis of isopentenyl diphosphate (IPP) and dimethylallyl diphosphate (DMAPP), two major building blocks of isoprenoid compounds. Catalyzes the conversion of 4-diphosphocytidyl-2-C-methyl-D-erythritol 2-phosphate (CDP-ME2P) to 2-C-methyl-D-erythritol 2,4-cyclodiphosphate (ME-CPP) with a corresponding release of cytidine 5-monophosphate (CMP). The chain is 2-C-methyl-D-erythritol 2,4-cyclodiphosphate synthase from Chlorobium phaeovibrioides (strain DSM 265 / 1930) (Prosthecochloris vibrioformis (strain DSM 265)).